The chain runs to 275 residues: Phosphate import ATP-binding protein PstB 2 (275 aa).

One can recognise an ABC transporter domain in the interval 29-270; that stretch reads LEVKNLNIYY…PSEKKTEDYI (242 aa). 61–68 provides a ligand contact to ATP; that stretch reads GPSGCGKS.

Belongs to the ABC transporter superfamily. Phosphate importer (TC 3.A.1.7) family. As to quaternary structure, the complex is composed of two ATP-binding proteins (PstB), two transmembrane proteins (PstC and PstA) and a solute-binding protein (PstS).

It localises to the cell membrane. The catalysed reaction is phosphate(out) + ATP + H2O = ADP + 2 phosphate(in) + H(+). In terms of biological role, part of the ABC transporter complex PstSACB involved in phosphate import. Responsible for energy coupling to the transport system. The chain is Phosphate import ATP-binding protein PstB 2 from Bacillus licheniformis (strain ATCC 14580 / DSM 13 / JCM 2505 / CCUG 7422 / NBRC 12200 / NCIMB 9375 / NCTC 10341 / NRRL NRS-1264 / Gibson 46).